Reading from the N-terminus, the 592-residue chain is 2-succinyl-5-enolpyruvyl-6-hydroxy-3-cyclohexene-1-carboxylate synthase (592 aa).

It belongs to the TPP enzyme family. MenD subfamily. In terms of assembly, homodimer. Mg(2+) serves as cofactor. Mn(2+) is required as a cofactor. Requires thiamine diphosphate as cofactor.

It catalyses the reaction isochorismate + 2-oxoglutarate + H(+) = 5-enolpyruvoyl-6-hydroxy-2-succinyl-cyclohex-3-ene-1-carboxylate + CO2. Its pathway is quinol/quinone metabolism; 1,4-dihydroxy-2-naphthoate biosynthesis; 1,4-dihydroxy-2-naphthoate from chorismate: step 2/7. It participates in quinol/quinone metabolism; menaquinone biosynthesis. In terms of biological role, catalyzes the thiamine diphosphate-dependent decarboxylation of 2-oxoglutarate and the subsequent addition of the resulting succinic semialdehyde-thiamine pyrophosphate anion to isochorismate to yield 2-succinyl-5-enolpyruvyl-6-hydroxy-3-cyclohexene-1-carboxylate (SEPHCHC). The protein is 2-succinyl-5-enolpyruvyl-6-hydroxy-3-cyclohexene-1-carboxylate synthase of Leifsonia xyli subsp. xyli (strain CTCB07).